Reading from the N-terminus, the 346-residue chain is MADEEGETEVQEMEVDRRESDESADDEAKEKPDRVDGGVKNGEVPLGEADAPVDIETINLDPEAEDVDLNHFKIGKIQGFEVLKKVKTLCLRQNLIKLIENLEQLVTLTELDLYDNQIRKIGNLETLRDLQILDLSFNLLRRIEGLESLSHLQRLYLVNNKISRIENFGTLTQLRLLELGSNRLRVIENLDSLRELDSLFLGKNKITKLQNLETLTNLTVLSVQSNRLTKIEGLQNLVNLRELYLSDNGIQVIEGLENNNKLTTLDLASNRIKRIENIKHLSELQEFWMNDNLVENWSDLEELSGAPGLQTVYLERNPLQKDAQYRRKIMLALPSVRQIDATFVRF.

The span at 1–13 shows a compositional bias: acidic residues; the sequence is MADEEGETEVQEM. The interval 1–46 is disordered; the sequence is MADEEGETEVQEMEVDRRESDESADDEAKEKPDRVDGGVKNGEVPL. The segment covering 14–37 has biased composition (basic and acidic residues); that stretch reads EVDRRESDESADDEAKEKPDRVDG. LRR repeat units follow at residues 63-84, 85-106, 107-128, 129-150, 151-172, 173-194, 195-216, 217-238, 239-260, 261-282, and 283-304; these read EAED…EVLK, KVKT…EQLV, TLTE…ETLR, DLQI…ESLS, HLQR…GTLT, QLRL…DSLR, ELDS…ETLT, NLTV…QNLV, NLRE…ENNN, KLTT…KHLS, and ELQE…EELS. Positions 317–346 constitute an LRRCT domain; it reads NPLQKDAQYRRKIMLALPSVRQIDATFVRF.

This sequence belongs to the SDS22 family.

Its subcellular location is the nucleus. In terms of biological role, regulatory subunit of protein phosphatase 1. The chain is Protein phosphatase 1 regulatory subunit 7 (ppp1r7) from Xenopus tropicalis (Western clawed frog).